We begin with the raw amino-acid sequence, 203 residues long: Small ribosomal subunit protein uS3 (203 aa).

Belongs to the universal ribosomal protein uS3 family. In terms of assembly, part of the 30S ribosomal subunit. Forms a tight complex with proteins S10 and S14.

Binds the lower part of the 30S subunit head. Binds mRNA in the 70S ribosome, positioning it for translation. The polypeptide is Small ribosomal subunit protein uS3 (Carsonella ruddii (strain PV)).